The primary structure comprises 120 residues: Ribosome-binding factor A (120 aa).

It belongs to the RbfA family. In terms of assembly, monomer. Binds 30S ribosomal subunits, but not 50S ribosomal subunits or 70S ribosomes.

It localises to the cytoplasm. One of several proteins that assist in the late maturation steps of the functional core of the 30S ribosomal subunit. Associates with free 30S ribosomal subunits (but not with 30S subunits that are part of 70S ribosomes or polysomes). Required for efficient processing of 16S rRNA. May interact with the 5'-terminal helix region of 16S rRNA. This Chlorobaculum parvum (strain DSM 263 / NCIMB 8327) (Chlorobium vibrioforme subsp. thiosulfatophilum) protein is Ribosome-binding factor A.